The primary structure comprises 114 residues: Protein ORF3 (114 aa).

2 hydrophobic regions span residues 6–22 and 33–53; these read CALG…CLCC and AVVG…GLIL. Residues 28 to 68 are interaction with host HPX; the sequence is VSRLAAVVGGAAAVPAVVSGVTGLILSPSQSPIFIQPTPSP. An interaction with the capsid protein region spans residues 48–72; the sequence is VTGLILSPSQSPIFIQPTPSPPMSP. Ser-71 bears the Phosphoserine; by host mark. Residues 72–114 are homodimerization, and interaction with host AMBP/bikunin; it reads PLRPGLDLVFANPPDHSAPLGVTRPSAPPLPHVVDLPQLGPRR. A disordered region spans residues 91–114; the sequence is LGVTRPSAPPLPHVVDLPQLGPRR. Residues 95-104 are interaction with host SRC, HCK, FYN, PIK3R3 and GRB2; it reads RPSAPPLPHV. Residues 96-99 carry the PTAP/PSAP motif motif; sequence PSAP.

Belongs to the hepevirus ORF3 protein family. Forms homooligomers. Interacts with host SRC, HCK, FYN, PIK3R3 and GRB2 (via SH3 domain); binding does not activate the kinases. Interacts with host AMBP/bikunin and AMBP/alpha-1-microglobulin peptides. Interacts with host HPX/hemopexin. Interacts (when phosphorylated) with capsid protein ORF2. Interacts with host TSG101; this interaction plays a role in viral release from the host cell. Interacts with host SIRPA; this interaction down-regulates the phosphorylation of host IRF3. In terms of processing, palmitoylated in the N-terminus.

Its subcellular location is the host endoplasmic reticulum membrane. It localises to the host cytoplasm. It is found in the host cytoskeleton. The protein resides in the virion. The protein localises to the host cell membrane. Small multifunctional phosphoprotein involved in virion morphogenesis, egress and counteracting host innate immunity. Plays critical roles in the final steps of viral release by interacting with host TSG101, a member of the vacuolar protein-sorting pathway and using other cellular host proteins involved in vesicle formation pathway. Also acts as a viroporin and forms ion conductive pores allowing viral particle release. Impairs the generation of type I interferon by down-regulating host TLR3 and TLR7 as well as their downstream signaling pathways. Down-regulates the phosphorylation of host IRF3 via the interaction with host SIRP-alpha, thereby inhibiting IFN-I expression. Interacts with host microtubules. The sequence is that of Protein ORF3 from Hepatitis E virus genotype 1 (isolate Human/Burma) (HEV-1).